The chain runs to 215 residues: Pyridoxine/pyridoxamine 5'-phosphate oxidase (215 aa).

Substrate contacts are provided by residues 9 to 12 (RRDY) and Lys69. FMN is bound by residues 64 to 69 (RVLLLK), 79 to 80 (FS), Lys86, and Gln108. The substrate site is built by Tyr126, Arg130, and Ser134. FMN-binding positions include 143-144 (QS) and Trp188. 194–196 (RLH) is a substrate binding site. Arg198 is a binding site for FMN.

Belongs to the pyridoxamine 5'-phosphate oxidase family. As to quaternary structure, homodimer. FMN serves as cofactor.

The catalysed reaction is pyridoxamine 5'-phosphate + O2 + H2O = pyridoxal 5'-phosphate + H2O2 + NH4(+). It carries out the reaction pyridoxine 5'-phosphate + O2 = pyridoxal 5'-phosphate + H2O2. It functions in the pathway cofactor metabolism; pyridoxal 5'-phosphate salvage; pyridoxal 5'-phosphate from pyridoxamine 5'-phosphate: step 1/1. It participates in cofactor metabolism; pyridoxal 5'-phosphate salvage; pyridoxal 5'-phosphate from pyridoxine 5'-phosphate: step 1/1. Its function is as follows. Catalyzes the oxidation of either pyridoxine 5'-phosphate (PNP) or pyridoxamine 5'-phosphate (PMP) into pyridoxal 5'-phosphate (PLP). This chain is Pyridoxine/pyridoxamine 5'-phosphate oxidase, found in Ectopseudomonas mendocina (strain ymp) (Pseudomonas mendocina).